The sequence spans 880 residues: Interference hedgehog (880 aa).

An N-terminal signal peptide occupies residues 1–20 (MTLLTSSLLLFSLLTSRLEA). Over 21-703 (IPVLEKSPAH…ETFNMSPMLT (683 aa)) the chain is Extracellular. Ig-like C2-type domains are found at residues 45–142 (PGVR…TARL), 155–232 (PESP…ERIQ), 252–340 (PHLL…YIKV), and 346–432 (PQIV…LQVN). Intrachain disulfides connect Cys68/Cys126, Cys173/Cys220, Cys276/Cys324, and Cys367/Cys414. Asn102 and Asn209 each carry an N-linked (GlcNAc...) asparagine glycan. Residues 429-467 (LQVNPKQIQEPRESGGTHRPNPNQGSKHKQMYPPTPPNV) are disordered. 2 Fibronectin type-III domains span residues 461-567 (PPTP…LQPG) and 575-670 (VPEL…TQRP). Residue Asn466 is glycosylated (N-linked (GlcNAc...) asparagine). 4 residues coordinate heparin: Arg497, Lys501, Lys503, and Arg541. Residue Asn557 is glycosylated (N-linked (GlcNAc...) asparagine). Positions 662-692 (LKQGRTQRPKTSTTEEPTLQMGDRDTTTPSH) are disordered. A compositionally biased stretch (polar residues) spans 665–678 (GRTQRPKTSTTEEP). Asn693 carries N-linked (GlcNAc...) asparagine glycosylation. Residues 704–724 (GTIGGGAVLILLLISTCLCVC) traverse the membrane as a helical segment. Residues 725–880 (RRRNSRSRGN…SSGSLNSVGV (156 aa)) lie on the Cytoplasmic side of the membrane. Disordered regions lie at residues 728-762 (NSRS…QRQR) and 775-880 (QQQQ…SVGV). Composition is skewed to low complexity over residues 823 to 837 (RAGG…NNNN) and 864 to 880 (SSRS…SVGV).

The protein belongs to the immunoglobulin superfamily. IHOG family. As to quaternary structure, homodimer. Heterotetramer; 2 iHog chains bind 2 hh chains when facilitated by heparin, heparin is required to promote high-affinity interactions between hh and iHog.

Its subcellular location is the membrane. Mediates response to the active Hedgehog (Hh) protein signal in embryos, functioning upstream or at the level of patched (ptc). The sequence is that of Interference hedgehog from Drosophila simulans (Fruit fly).